We begin with the raw amino-acid sequence, 185 residues long: Photosystem I assembly protein Ycf4 (185 aa).

Helical transmembrane passes span 20–40 (GNFF…AVGA) and 57–77 (ILFF…LFIS).

This sequence belongs to the Ycf4 family.

It localises to the plastid. The protein resides in the chloroplast thylakoid membrane. Its function is as follows. Seems to be required for the assembly of the photosystem I complex. The sequence is that of Photosystem I assembly protein Ycf4 from Sorghum bicolor (Sorghum).